An 83-amino-acid polypeptide reads, in one-letter code: RNA-binding protein Hfq (83 aa).

The Sm domain occupies 9–68 (DPYLNILRKERIPVSIFLVNGIKLQGQIESFDQFVILLRNTVSQMVYKHAISTVVPSRNV).

The protein belongs to the Hfq family. As to quaternary structure, homohexamer.

In terms of biological role, RNA chaperone that binds small regulatory RNA (sRNAs) and mRNAs to facilitate mRNA translational regulation in response to envelope stress, environmental stress and changes in metabolite concentrations. Also binds with high specificity to tRNAs. The sequence is that of RNA-binding protein Hfq from Chromohalobacter salexigens (strain ATCC BAA-138 / DSM 3043 / CIP 106854 / NCIMB 13768 / 1H11).